The following is a 627-amino-acid chain: Hemocyanin B chain (627 aa).

3 residues coordinate Cu cation: histidine 173, histidine 177, and histidine 204. N-linked (GlcNAc...) asparagine glycosylation is found at asparagine 312 and asparagine 316. Cu cation contacts are provided by histidine 324, histidine 328, and histidine 364. Cysteine 534 and cysteine 582 are joined by a disulfide.

It belongs to the tyrosinase family. Hemocyanin subfamily. In terms of assembly, tarantula hemocyanin is a 24-chain polymer with seven different chains identified. In terms of tissue distribution, hemolymph.

It is found in the secreted. The protein resides in the extracellular space. Hemocyanins are copper-containing oxygen carriers occurring freely dissolved in the hemolymph of many mollusks and arthropods. This is Hemocyanin B chain (HCB) from Aphonopelma sp. (American tarantula).